We begin with the raw amino-acid sequence, 112 residues long: Thioredoxin (112 aa).

One can recognise a Thioredoxin domain in the interval 2 to 112; that stretch reads SEDSATVAVT…ALLRELSDAL (111 aa). The cysteines at positions 35 and 38 are disulfide-linked.

This sequence belongs to the thioredoxin family.

Functionally, participates in various redox reactions through the reversible oxidation of its active center dithiol to a disulfide and catalyzes dithiol-disulfide exchange reactions. In Mycolicibacterium smegmatis (Mycobacterium smegmatis), this protein is Thioredoxin (trxA).